An 851-amino-acid polypeptide reads, in one-letter code: Alanine--tRNA ligase (851 aa).

Zn(2+) contacts are provided by His-554, His-558, Cys-656, and His-660.

Belongs to the class-II aminoacyl-tRNA synthetase family. Zn(2+) is required as a cofactor.

It is found in the cytoplasm. It carries out the reaction tRNA(Ala) + L-alanine + ATP = L-alanyl-tRNA(Ala) + AMP + diphosphate. In terms of biological role, catalyzes the attachment of alanine to tRNA(Ala) in a two-step reaction: alanine is first activated by ATP to form Ala-AMP and then transferred to the acceptor end of tRNA(Ala). Also edits incorrectly charged Ser-tRNA(Ala) and Gly-tRNA(Ala) via its editing domain. The protein is Alanine--tRNA ligase of Aliarcobacter butzleri (strain RM4018) (Arcobacter butzleri).